The following is a 147-amino-acid chain: Ribosome maturation factor RimP (147 aa).

Belongs to the RimP family.

The protein resides in the cytoplasm. Functionally, required for maturation of 30S ribosomal subunits. This Thermosipho melanesiensis (strain DSM 12029 / CIP 104789 / BI429) protein is Ribosome maturation factor RimP.